Here is a 155-residue protein sequence, read N- to C-terminus: Endoribonuclease YbeY (155 aa).

Zn(2+) contacts are provided by His-114, His-118, and His-124.

Belongs to the endoribonuclease YbeY family. Zn(2+) is required as a cofactor.

It is found in the cytoplasm. Single strand-specific metallo-endoribonuclease involved in late-stage 70S ribosome quality control and in maturation of the 3' terminus of the 16S rRNA. The sequence is that of Endoribonuclease YbeY from Photorhabdus laumondii subsp. laumondii (strain DSM 15139 / CIP 105565 / TT01) (Photorhabdus luminescens subsp. laumondii).